The sequence spans 306 residues: tRNA pseudouridine synthase B (306 aa).

Asp-39 serves as the catalytic Nucleophile.

The protein belongs to the pseudouridine synthase TruB family. Type 1 subfamily.

It catalyses the reaction uridine(55) in tRNA = pseudouridine(55) in tRNA. Its function is as follows. Responsible for synthesis of pseudouridine from uracil-55 in the psi GC loop of transfer RNAs. The protein is tRNA pseudouridine synthase B of Arthrobacter sp. (strain FB24).